The sequence spans 641 residues: SUMO-activating enzyme subunit 2 (641 aa).

ATP-binding positions include 24–29 (GAGGIG), D48, 56–59 (NLNR), K72, 95–96 (SI), and 117–122 (DNNAAR). Zn(2+) contacts are provided by C158 and C161. The active-site Glycyl thioester intermediate is the C173. A Glycyl lysine isopeptide (Lys-Gly) (interchain with G-Cter in SUMO) cross-link involves residue K190. K236 participates in a covalent cross-link: Glycyl lysine isopeptide (Lys-Gly) (interchain with G-Cter in SUMO1). Glycyl lysine isopeptide (Lys-Gly) (interchain with G-Cter in SUMO) cross-links involve residues K257 and K275. 2 residues coordinate Zn(2+): C439 and C442. The segment at 546–641 (GDVPEKGPQK…EEDDDIIALD (96 aa)) is disordered. A compositionally biased stretch (polar residues) spans 556 to 579 (PSEQSVKNITNGSDDGAQPSTSKA). Residues 582–594 (QDDVLIVDSDEES) are compositionally biased toward acidic residues. Glycyl lysine isopeptide (Lys-Gly) (interchain with G-Cter in SUMO) cross-links involve residues K610, K612, and K623. Over residues 630 to 641 (PVEEDDDIIALD) the composition is skewed to acidic residues.

The protein belongs to the ubiquitin-activating E1 family. Heterodimer of sae1 and uba2/sae2. The heterodimer corresponds to the two domains that are encoded on a single polypeptide chain in ubiquitin-activating enzyme E1. Interacts with ube2i. Sumoylated with SUMO1 and SUMO2/3 and by UBC9. Sumoylation at Lys-236 inhibits enzymatic activity. Sumoylation at the C-terminal lysine cluster plays an essential role in nuclear trafficking.

It localises to the cytoplasm. The protein localises to the nucleus. It functions in the pathway protein modification; protein sumoylation. In terms of biological role, the heterodimer acts as an E1 ligase for sumo1, sumo2, and sumo3. It mediates ATP-dependent activation of sumo proteins followed by formation of a thioester bond between a sumo protein and a conserved active site cysteine residue on uba2/sae2. The chain is SUMO-activating enzyme subunit 2 (uba2) from Xenopus tropicalis (Western clawed frog).